Consider the following 268-residue polypeptide: Lipase (268 aa).

A signal peptide spans 1-34; it reads MRLSRRAATASALLLTPALALFGASAAVSAPRIQ. The active-site Nucleophile is the serine 44. 3 cysteine pairs are disulfide-bonded: cysteine 61–cysteine 86, cysteine 127–cysteine 135, and cysteine 185–cysteine 232. Histidine 250 is a catalytic residue.

As to quaternary structure, monomer.

The protein localises to the secreted. It catalyses the reaction a triacylglycerol + H2O = a diacylglycerol + a fatty acid + H(+). The catalysed reaction is hexadecanoyl-CoA + H2O = hexadecanoate + CoA + H(+). With respect to regulation, inhibited by 3,4-dichloroisocoumarin and tetrahydrolipstatin in the absence of substrate, but by phenylmethylsulfonyl fluoride (PMSF) only in the presence of substrate. Several water-miscible solvents enhance the lipase hydrolytic activity in vitro. Tetrahydrofuran and N,N-dimethylformamide (both 50%) inactivate the enzyme with t1/2 of 5 minutes and t1/2 of 2 hours, respectively. In terms of biological role, catalyzes the hydrolysis of p-nitrophenyl esters, alpha- and beta-naphthyl esters, and triacylglycerols, with a preference for medium acyl chain length (C8-C12). Shows a much higher hydrolysis rate of glycerol esters of unsaturated C16 and C18 fatty acids than that of their saturated counterparts, and a preference for cis double bond. Is also able to hydrolyze several natural oils and Tween detergents. Also displays thioesterase and phospholipase activities, towards palmitoyl-coenzyme A and diheptanoyl glycerophosphocholine, respectively. Shows transesterification activity of racemic 1-phenyl ethanol with vinyl acetate in hexane, proceeding with partial (R)-enantioselectivity. The chain is Lipase from Streptomyces rimosus.